Consider the following 183-residue polypeptide: Large ribosomal subunit protein uL6 (183 aa).

Belongs to the universal ribosomal protein uL6 family. In terms of assembly, part of the 50S ribosomal subunit.

Its function is as follows. This protein binds to the 23S rRNA, and is important in its secondary structure. It is located near the subunit interface in the base of the L7/L12 stalk, and near the tRNA binding site of the peptidyltransferase center. This Parabacteroides distasonis (strain ATCC 8503 / DSM 20701 / CIP 104284 / JCM 5825 / NCTC 11152) protein is Large ribosomal subunit protein uL6.